We begin with the raw amino-acid sequence, 470 residues long: MFTISGVVLITRPVYDEGSLNYCQSGAMNNGILLESVEGNKPRYSIGGAEPIGTINANAVLTAATYAEDVKFTDADPLNGTRVAICNGEDTQQEEMGFQGGALGYFAYDVGRRLEGYNDLGIEDWAIPDLAGSSYEIGVSADHQNDVIVLIAHASADGNDVFITSSRQLSMVAGPTCCASGDVEILRNKLHYYGVIPFSQDDCGFNRLKDYLGSGDMYQVNLGNRNVGAIVMTLFQGYNQLRLMNPGPYMVFLDEANIIMASPEIVLADEANDLNTRPIAGTLMRLNEQDEDGVNAACLGQHHKDRAEHMMIVDLVRNDLGRVGRFGSVNVQEIVGAENYSVVMHIVSRVTGSLNEAFEAMEIIRAGFPGGSITGAPKVRAMEIIEELEPQRRDGWGGSIGYIAYRGNIGYRIAIRTLFACNGQLFASSGAGLVGDSMEDGEYNETFEKMRALRSFFCAAVHMGKTPYLS.

This sequence belongs to the anthranilate synthase component I family. Monomer. Heterodimer consisting of two non-identical subunits: a glutamine amidotransferase subunit (PabA) and a aminodeoxychorismate synthase subunit (PabB). Requires Mg(2+) as cofactor.

It catalyses the reaction chorismate + L-glutamine = 4-amino-4-deoxychorismate + L-glutamate. It participates in cofactor biosynthesis; tetrahydrofolate biosynthesis; 4-aminobenzoate from chorismate: step 1/2. Part of a heterodimeric complex that catalyzes the two-step biosynthesis of 4-amino-4-deoxychorismate (ADC), a precursor of p-aminobenzoate (PABA) and tetrahydrofolate. In the first step, a glutamine amidotransferase (PabA) generates ammonia as a substrate that, along with chorismate, is used in the second step, catalyzed by aminodeoxychorismate synthase (PabB) to produce ADC. This chain is Aminodeoxychorismate synthase component 1 (pabB), found in Lactococcus lactis subsp. lactis (Streptococcus lactis).